A 134-amino-acid polypeptide reads, in one-letter code: Transcription antitermination protein NusB (134 aa).

The protein belongs to the NusB family.

In terms of biological role, involved in transcription antitermination. Required for transcription of ribosomal RNA (rRNA) genes. Binds specifically to the boxA antiterminator sequence of the ribosomal RNA (rrn) operons. The protein is Transcription antitermination protein NusB of Shewanella woodyi (strain ATCC 51908 / MS32).